We begin with the raw amino-acid sequence, 178 residues long: MQDVQRTIEVSVGPIVGLDYTLLYDTLPETVSDNITLPDLKDPERVTEDTKKLILKGCVYIAYHHPLETDTLFIKVHKHIPEFCHSFLSHLLGGEDDDNALIDIGLFFNMLQPSLGGWITKNFLRHPNRMSKDQIKMLLDQIIKMAKAESSDTEEYEKVWKKMPTYFESIIQPLLHKT.

The protein belongs to the tenuiviruses NCP family.

It localises to the host cytoplasm. In terms of biological role, induces the formation of large intracellular inclusion body, organized in amorphous and crystalline arrays. Presumably the main cause of the stripe disease observed in host. This chain is Major non-capsid protein, found in Rice stripe virus (isolate T) (RSV).